Reading from the N-terminus, the 501-residue chain is Atypical kinase COQ8, mitochondrial (501 aa).

The transit peptide at 1 to 29 (MVTNMVKLRNLRRLYCSSRLLRTIQNGRI) directs the protein to the mitochondrion. The segment at 41–69 (YTTKSAKEGEENVERKHEEEKKDTLKSSS) is disordered. A compositionally biased stretch (basic and acidic residues) spans 45 to 65 (SAKEGEENVERKHEEEKKDTL). The short motif at 134–137 (KIGQ) is the KxGQ motif element. A Protein kinase domain is found at 188–501 (KFDKIPMAAA…LFKEIFAYKV (314 aa)). The AAAS motif signature appears at 195-198 (AAAS). Residues S198, K216, and 303-306 (MTRM) each bind ATP. Residue D346 is the Proton acceptor of the active site. The ATP site is built by N351 and D365.

The protein belongs to the protein kinase superfamily. ADCK protein kinase family. As to quaternary structure, forms homopolymers. Predominantly associated with a complex of about 500 kDa.

The protein resides in the mitochondrion inner membrane. It functions in the pathway cofactor biosynthesis; ubiquinone biosynthesis. Its function is as follows. Atypical kinase involved in the biosynthesis of coenzyme Q, also named ubiquinone, an essential lipid-soluble electron transporter for aerobic cellular respiration. Its substrate specificity is still unclear: may act as a protein kinase that mediates phosphorylation of COQ3, COQ5 and/or COQ7. According to other reports, acts as a small molecule kinase, possibly a lipid kinase that phosphorylates a prenyl lipid in the ubiquinone biosynthesis pathway, as suggested by its ability to bind coenzyme Q lipid intermediates. The protein is Atypical kinase COQ8, mitochondrial (COQ8) of Saccharomyces cerevisiae (strain ATCC 204508 / S288c) (Baker's yeast).